Consider the following 71-residue polypeptide: Small ribosomal subunit protein bS21 (71 aa).

It belongs to the bacterial ribosomal protein bS21 family.

This is Small ribosomal subunit protein bS21 from Nitrosococcus oceani (strain ATCC 19707 / BCRC 17464 / JCM 30415 / NCIMB 11848 / C-107).